The primary structure comprises 87 residues: Envelope glycoprotein N (87 aa).

Positions 1–24 are cleaved as a signal peptide; that stretch reads MGSITASFILITMQILFFCEDSSG. Residues 25 to 48 lie on the Virion surface side of the membrane; it reads EPNFAERNFWHASCSARGVYIDGS. The chain crosses the membrane as a helical span at residues 49–69; sequence MITTLFFYASLLGVCVALISL. Over 70–87 the chain is Intravirion; sequence AYHACFRLFTRSVLRSTW.

The protein belongs to the herpesviridae glycoprotein N family. Interacts (via N-terminus) with gM (via N-terminus). The gM-gN heterodimer forms the gCII complex.

The protein resides in the virion membrane. Its subcellular location is the host membrane. It is found in the host Golgi apparatus. It localises to the host trans-Golgi network. Its function is as follows. Envelope glycoprotein necessary for proper maturation of gM and modulation of its membrane fusion activity. Also plays a critical role in virion morphogenesis. In Varicella-zoster virus (strain Dumas) (HHV-3), this protein is Envelope glycoprotein N.